The chain runs to 270 residues: Flavodoxin/ferredoxin--NADP reductase (270 aa).

The FAD-binding FR-type domain occupies 12–113; the sequence is VLPDAQTVTS…PKPVGTLVID (102 aa). FAD contacts are provided by residues 62-65, 78-80, and 86-88; these read RAYS, YSI, and PLT. Position 126 (threonine 126) interacts with NADP(+). Threonine 128 provides a ligand contact to FAD. Residues arginine 156, 192–193, arginine 201, and aspartate 238 each bind NADP(+); that span reads TR. Residue 264–270 participates in FAD binding; it reads AFVGEGI.

This sequence belongs to the ferredoxin--NADP reductase type 1 family. As to quaternary structure, monomer. FAD serves as cofactor.

It localises to the cytoplasm. It carries out the reaction 2 reduced [2Fe-2S]-[ferredoxin] + NADP(+) + H(+) = 2 oxidized [2Fe-2S]-[ferredoxin] + NADPH. The catalysed reaction is reduced [flavodoxin] + NADP(+) = oxidized [flavodoxin] + NADPH + 2 H(+). Transports electrons between flavodoxin or ferredoxin and NADPH. This chain is Flavodoxin/ferredoxin--NADP reductase, found in Rhodobacter capsulatus (Rhodopseudomonas capsulata).